Consider the following 401-residue polypeptide: CinA-like protein (401 aa).

The protein belongs to the CinA family.

The chain is CinA-like protein from Thermosipho melanesiensis (strain DSM 12029 / CIP 104789 / BI429).